Reading from the N-terminus, the 457-residue chain is Dynein regulatory complex protein 10 (457 aa).

Coiled-coil stretches lie at residues 101–127 (EKASILQRKQKELEKGEEAEEDWDQER), 209–258 (IQDI…LHQV), and 292–381 (QQDI…AESE). The region spanning 397–426 (MVRAATLIQAMWKGYLVRSMLRSRKKKRVK) is the IQ domain. A disordered region spans residues 419-457 (SRKKKRVKSKGKDKGKGKEKPKEEKGKEKKAKGKGKGKK). The segment covering 428–445 (KGKDKGKGKEKPKEEKGK) has biased composition (basic and acidic residues). Positions 446 to 457 (EKKAKGKGKGKK) are enriched in basic residues.

The protein belongs to the DRC10 family. In terms of assembly, component of the nexin-dynein regulatory complex (N-DRC). Interacts with CFAP52.

It localises to the cytoplasm. The protein localises to the cytoskeleton. It is found in the flagellum axoneme. Component of the nexin-dynein regulatory complex (N-DRC), a key regulator of ciliary/flagellar motility which maintains the alignment and integrity of the distal axoneme and regulates microtubule sliding in motile axonemes. This Rattus norvegicus (Rat) protein is Dynein regulatory complex protein 10 (Iqcd).